We begin with the raw amino-acid sequence, 427 residues long: Queuine tRNA-ribosyltransferase catalytic subunit (427 aa).

Catalysis depends on Asp-99, which acts as the Proton acceptor. Substrate is bound by residues Asp-99–Phe-103, Asp-153, Gln-196, and Gly-223. The tract at residues Gly-254–Asp-260 is RNA binding. Residue Asp-273 is the Nucleophile of the active site. Residues Thr-278 to Arg-282 form an RNA binding; important for wobble base 34 recognition region. Zn(2+) is bound by residues Cys-311, Cys-313, Cys-316, and His-341. Residues Pro-395–Ser-427 are disordered. Positions Asp-397–Glu-417 are enriched in basic and acidic residues.

The protein belongs to the queuine tRNA-ribosyltransferase family. In terms of assembly, heterodimer of a catalytic subunit and an accessory subunit. Requires Zn(2+) as cofactor.

It localises to the cytoplasm. The enzyme catalyses guanosine(34) in tRNA + queuine = queuosine(34) in tRNA + guanine. Catalytic subunit of the queuine tRNA-ribosyltransferase (TGT) that catalyzes the base-exchange of a guanine (G) residue with queuine (Q) at position 34 (anticodon wobble position) in tRNAs with GU(N) anticodons (tRNA-Asp, -Asn, -His and -Tyr), resulting in the hypermodified nucleoside queuosine (7-(((4,5-cis-dihydroxy-2-cyclopenten-1-yl)amino)methyl)-7-deazaguanosine). Catalysis occurs through a double-displacement mechanism. The nucleophile active site attacks the C1' of nucleotide 34 to detach the guanine base from the RNA, forming a covalent enzyme-RNA intermediate. The proton acceptor active site deprotonates the incoming queuine, allowing a nucleophilic attack on the C1' of the ribose to form the product. The polypeptide is Queuine tRNA-ribosyltransferase catalytic subunit (Tgt) (Drosophila melanogaster (Fruit fly)).